A 266-amino-acid chain; its full sequence is Pre-mRNA-splicing factor CWC26 (266 aa).

2 disordered regions span residues 1-37 and 118-149; these read MALHQYLSETYGPTKPKNKTKKKKKESKSDANSDKTS and TRKTIYRDAQGHKIQEDSKIDDSSFSRSKYED. The span at 16-26 shows a compositional bias: basic residues; sequence PKNKTKKKKKE. Basic and acidic residues predominate over residues 122–149; sequence IYRDAQGHKIQEDSKIDDSSFSRSKYED.

It belongs to the CWC26 family. In terms of assembly, belongs to the pre-mRNA retention and splicing (RES) complex composed of at least BUD13, IST3 and PML1. May also belong to the CWC complex (or CEF1-associated complex) composed of the U2, U5 and U6 snRNAs and at least BUD13, BUD31, BRR2, CDC40, CEF1, CLF1, CUS1, CWC2, CWC15, CWC21, CWC22, CWC23, CWC24, CWC25, CWC27, ECM2, HSH155, IST3, ISY1, LEA1, MSL1, NTC20, PRP8, PRP9, PRP11, PRP19, PRP21, PRP22, PRP45, PRP46, SLU7, SMB1, SMD1, SMD2, SMD3, SMX2, SMX3, SNT309, SNU114, SPP2, SYF1, SYF2, RSE1 and YJU2. Interacts with IST3 and PML1.

The protein resides in the cytoplasm. It localises to the nucleus. Its function is as follows. Required for efficient splicing and pre-mRNA nuclear retention. May also be involved in positioning the proximal bud pole signal. This is Pre-mRNA-splicing factor CWC26 (BUD13) from Saccharomyces cerevisiae (strain ATCC 204508 / S288c) (Baker's yeast).